A 141-amino-acid chain; its full sequence is uncharacterized protein (141 aa).

The HTH marR-type domain maps to 4–139 (RTQMMYDMET…LIELFSKLDK (136 aa)). A DNA-binding region (H-T-H motif) is located at residues 53 to 76 (VTEFAPILEVSASHITAVTDALVE).

This is an uncharacterized protein from Bacillus subtilis (strain 168).